Here is a 278-residue protein sequence, read N- to C-terminus: MSVTPDPTVGQALHPFSVPPTPAELDHIAAFYNVHPTPPLIGFSLIGSVNIRPGGTSQRLTGIFDATPNSLPDAVASLSAHNFHHLLDWHHSIDPAHIAAAPHPHTPAIKAALQRLTLIPNVIIYAPPTPSPPPPPAPTQPTRPTPGPAFFPQPFKVELHHPTPKTSSLPAPSLPTSLPPIITNQYLRLQISTPTGARQTYLRALIPKSPDLTDFILRIDLTEYHAHLIFTAELTRDHSITLARGPYVWPTFLPPSINNLIKLTHAAAEPSLQLTEIS.

Positions 127–151 (PPTPSPPPPPAPTQPTRPTPGPAFF) are enriched in pro residues. Positions 127 to 174 (PPTPSPPPPPAPTQPTRPTPGPAFFPQPFKVELHHPTPKTSSLPAPSL) are disordered. The segment covering 164 to 174 (PKTSSLPAPSL) has biased composition (low complexity).

This is an uncharacterized protein from Botryotinia fuckeliana (Noble rot fungus).